A 209-amino-acid polypeptide reads, in one-letter code: Uracil phosphoribosyltransferase (209 aa).

Residues arginine 79, arginine 104, and 131-139 contribute to the 5-phospho-alpha-D-ribose 1-diphosphate site; that span reads DPMLATGGS. Uracil contacts are provided by residues isoleucine 194 and 199–201; that span reads GDA. Aspartate 200 is a 5-phospho-alpha-D-ribose 1-diphosphate binding site.

It belongs to the UPRTase family. Homodimer. Requires Mg(2+) as cofactor.

It catalyses the reaction UMP + diphosphate = 5-phospho-alpha-D-ribose 1-diphosphate + uracil. It participates in pyrimidine metabolism; UMP biosynthesis via salvage pathway; UMP from uracil: step 1/1. With respect to regulation, allosterically activated by GTP. Functionally, catalyzes the conversion of uracil and 5-phospho-alpha-D-ribose 1-diphosphate (PRPP) to UMP and diphosphate. The chain is Uracil phosphoribosyltransferase from Bacillus caldolyticus.